Reading from the N-terminus, the 343-residue chain is tRNA N6-adenosine threonylcarbamoyltransferase (343 aa).

The Fe cation site is built by H111 and H115. Substrate contacts are provided by residues 134 to 138 (LVSGG), D167, G180, and N276. D304 serves as a coordination point for Fe cation.

Belongs to the KAE1 / TsaD family. Fe(2+) serves as cofactor.

Its subcellular location is the cytoplasm. It carries out the reaction L-threonylcarbamoyladenylate + adenosine(37) in tRNA = N(6)-L-threonylcarbamoyladenosine(37) in tRNA + AMP + H(+). Its function is as follows. Required for the formation of a threonylcarbamoyl group on adenosine at position 37 (t(6)A37) in tRNAs that read codons beginning with adenine. Is involved in the transfer of the threonylcarbamoyl moiety of threonylcarbamoyl-AMP (TC-AMP) to the N6 group of A37, together with TsaE and TsaB. TsaD likely plays a direct catalytic role in this reaction. This Chromohalobacter salexigens (strain ATCC BAA-138 / DSM 3043 / CIP 106854 / NCIMB 13768 / 1H11) protein is tRNA N6-adenosine threonylcarbamoyltransferase.